A 255-amino-acid chain; its full sequence is Triosephosphate isomerase (255 aa).

Substrate is bound at residue 9–11; the sequence is NWK. Catalysis depends on H95, which acts as the Electrophile. E167 acts as the Proton acceptor in catalysis. Substrate contacts are provided by residues G173, S212, and 233–234; that span reads GG.

It belongs to the triosephosphate isomerase family. Homodimer.

It localises to the cytoplasm. It carries out the reaction D-glyceraldehyde 3-phosphate = dihydroxyacetone phosphate. It functions in the pathway carbohydrate biosynthesis; gluconeogenesis. Its pathway is carbohydrate degradation; glycolysis; D-glyceraldehyde 3-phosphate from glycerone phosphate: step 1/1. Involved in the gluconeogenesis. Catalyzes stereospecifically the conversion of dihydroxyacetone phosphate (DHAP) to D-glyceraldehyde-3-phosphate (G3P). The chain is Triosephosphate isomerase from Pectobacterium atrosepticum (strain SCRI 1043 / ATCC BAA-672) (Erwinia carotovora subsp. atroseptica).